The following is a 386-amino-acid chain: 3-ketosteroid-9-alpha-monooxygenase, oxygenase component (386 aa).

Residues Trp-26 to Val-128 enclose the Rieske domain. The [2Fe-2S] cluster site is built by Cys-67, His-69, Cys-86, and His-89. Positions 175, 181, 186, and 304 each coordinate Fe cation.

As to quaternary structure, homotrimer. The two-component system 3-ketosteroid-9-alpha-monooxygenase is composed of an oxygenase component KshA and a reductase component KshB. The cofactor is [2Fe-2S] cluster. Requires Fe cation as cofactor.

The enzyme catalyses androsta-1,4-diene-3,17-dione + 2 reduced [2Fe-2S]-[ferredoxin] + O2 + 2 H(+) = 9alpha-hydroxyandrosta-1,4-diene-3,17-dione + 2 oxidized [2Fe-2S]-[ferredoxin] + H2O. It catalyses the reaction androst-4-ene-3,17-dione + NADH + O2 + H(+) = 9alpha-hydroxy-androst-4-ene-3,17-dione + NAD(+) + H2O. The catalysed reaction is 3-oxochol-4-en-22-oate + NADH + O2 + H(+) = 9alpha-hydroxy-3-oxochol-4-en-22-oate + NAD(+) + H2O. It carries out the reaction 3-oxochola-1,4-dien-22-oate + NADH + O2 + H(+) = 9alpha-hydroxy-3-oxochola-1,4-dien-22-oate + NAD(+) + H2O. The enzyme catalyses 3-oxochol-4-en-22-oyl-CoA + NADH + O2 + H(+) = 9alpha-hydroxy-3-oxochol-4-en-22-oyl-CoA + NAD(+) + H2O. It catalyses the reaction 3-oxochola-1,4-dien-22-oyl-CoA + NADH + O2 + H(+) = 9alpha-hydroxy-3-oxochola-1,4-dien-22-oyl-CoA + NAD(+) + H2O. It participates in lipid metabolism; steroid biosynthesis. Its function is as follows. Involved in the degradation of cholesterol. Catalyzes the introduction of a 9a-hydroxyl moiety into 1,4-androstadiene-3,17-dione (ADD) to yield the 9alpha-hydroxy-1,4-androstadiene-3,17-dione (9OHADD) intermediate which spontaneously form 3-hydroxy-9,10-seconandrost-1,3,5(10)-triene-9,17-dione (HSA) via the meta-cleavage of ring B with concomitant aromatization of ring A. KSH is also able to use 4-androstene-3,17-dione (AD), 3-oxo-23,24-bisnorcholesta-4-en-22-oate (4-BNC), 3-oxo-23,24-bisnorcholesta-1,4-dien-22-oate (1,4-BNC), 3-oxo-23,24-bisnorcholesta-4-en-22-oyl-coenzyme A thioester (4-BNC-CoA) and 3-oxo-23,24-bisnorcholesta-1,4-dien-22-oyl-coenzyme A thioester (1,4-BNC-CoA) as substrates. This chain is 3-ketosteroid-9-alpha-monooxygenase, oxygenase component (kshA), found in Mycobacterium tuberculosis (strain ATCC 25618 / H37Rv).